A 277-amino-acid chain; its full sequence is Formamidopyrimidine-DNA glycosylase (277 aa).

P2 serves as the catalytic Schiff-base intermediate with DNA. The Proton donor role is filled by E3. K59 (proton donor; for beta-elimination activity) is an active-site residue. H96, R115, and R158 together coordinate DNA. The segment at 243–277 adopts an FPG-type zinc-finger fold; that stretch reads WVYGRGGNPCRRCGGEILREKRAGRSTHFCPRCQK. R267 serves as the catalytic Proton donor; for delta-elimination activity.

The protein belongs to the FPG family. In terms of assembly, monomer. Zn(2+) is required as a cofactor.

The catalysed reaction is Hydrolysis of DNA containing ring-opened 7-methylguanine residues, releasing 2,6-diamino-4-hydroxy-5-(N-methyl)formamidopyrimidine.. It catalyses the reaction 2'-deoxyribonucleotide-(2'-deoxyribose 5'-phosphate)-2'-deoxyribonucleotide-DNA = a 3'-end 2'-deoxyribonucleotide-(2,3-dehydro-2,3-deoxyribose 5'-phosphate)-DNA + a 5'-end 5'-phospho-2'-deoxyribonucleoside-DNA + H(+). Its function is as follows. Involved in base excision repair of DNA damaged by oxidation or by mutagenic agents. Acts as a DNA glycosylase that recognizes and removes damaged bases. Has a preference for oxidized purines, such as 7,8-dihydro-8-oxoguanine (8-oxoG). Has AP (apurinic/apyrimidinic) lyase activity and introduces nicks in the DNA strand. Cleaves the DNA backbone by beta-delta elimination to generate a single-strand break at the site of the removed base with both 3'- and 5'-phosphates. The protein is Formamidopyrimidine-DNA glycosylase of Heliobacterium modesticaldum (strain ATCC 51547 / Ice1).